The primary structure comprises 394 residues: S-adenosylmethionine synthase (394 aa).

Position 10 (E10) interacts with Mg(2+). H16 serves as a coordination point for ATP. A K(+)-binding site is contributed by E44. E57 and Q100 together coordinate L-methionine. Residues 168–170, 236–239, D247, 253–254, A270, K274, and K278 contribute to the ATP site; these read DGK, SGRF, and RK. D247 is an L-methionine binding site. K278 provides a ligand contact to L-methionine.

This sequence belongs to the AdoMet synthase family. Homotetramer. It depends on Mn(2+) as a cofactor. Mg(2+) is required as a cofactor. Co(2+) serves as cofactor. Requires K(+) as cofactor.

It is found in the cytoplasm. It catalyses the reaction L-methionine + ATP + H2O = S-adenosyl-L-methionine + phosphate + diphosphate. The protein operates within amino-acid biosynthesis; S-adenosyl-L-methionine biosynthesis; S-adenosyl-L-methionine from L-methionine: step 1/1. Its function is as follows. Catalyzes the formation of S-adenosylmethionine from methionine and ATP. The reaction comprises two steps that are both catalyzed by the same enzyme: formation of S-adenosylmethionine (AdoMet) and triphosphate, and subsequent hydrolysis of the triphosphate. This is S-adenosylmethionine synthase (METK) from Medicago truncatula (Barrel medic).